A 1187-amino-acid chain; its full sequence is MRLFFKFFYLSNEGFDNELCGNFKSPCKNIGYLFNNSRVDKNFNSTFYFSPGIYNLSSSIIIIDFQVGINLIGIGENKKIIITTHKGTRGVISYNSNLIIRGITFDNCKVKKNEFPLYVPETLTDYSDDKLDYLTLNYYIGTGGALQIVYSKVYISNCVFSNNKGRNGGAIFTVLSNITISDCIFYSNQALMRSEDGGNGGAIFFGLSTNAIILKSIFKNNMAITGGVIVQSNSELRVEDTVFAYNQASNGGVFLIFNDSKIESTRCSFYANYANISAIANIQNSFAFQKSCLYQENMASAMGGVFSLVDRTILFVTLSIFNDNYAPSSLIVENHGSGLAMFTNCEFTFSDNFKRQIIQSLFSISNYNFLLLKDSRVSNSKGNVIWCTSNAIIVVYNTTFYNVSSKVINIHSQGYFFSISTTFIECKAEDYLVVLRNGARGILFRNNFIDNNGILMVFTTYNSSMIIIESKFFNNIVRNELIAVRNEYTLQIYNSIFKNNIGKTRGCIISVDQLGKLTSTNNYFINNTSVYGTIINFVKKRFNYWHTDFQCFSTFKNDTIVNNTALVSGAIVYYRDKIIGTKYTCESCLFLNNIAHFGNNINSGFHSFSVIQASKVHSNEHFPALIYAFDQFDNLIRGKNDIRFHVSSCDDIHLTGVTSSTIQLNGVTALYNLKVNSPENHFCNLSYKSNPKKGDVKLPISILNCPQGEEMFDVSYQGKVFQCLKTIETSNIAKTVMIITTSILVLLILLCFGITIAYSKEKVINFGNIVFLILMLFSCLFLCIIIYVSIEPTNFSCQFSAIVFPIGIGILFTLTLLKQYKIYKLFKYSDFLKINTDNLKMVKYAGLIMVPVFLLVLIGVIVYPSKPTFILDLHTKTATKYCISRKYYVFSIVIVVYEVIILLTSCFIAMKSKRYHSTPGTFYESLFNSILIYNYTLVFIVLIPLFYTLQNNPTTIYLIYSIGSSILVFATLSIIFIPKINFLFRRKQIVSTLKKTIETQERDIQRNKDLLIFYKMFLIEKKNNNFNNNPIFNIHETFSSEDEDEDEEDDIGEGIYSLFNHWDQNKRKYNNNQIYPNQIPKQTTNSPSSQSIDFLNNPTIPKNKSINNLPNLFKKPKKKLKSKIISKSANSSPNINNNTINNNNNNNNNNNNNNNNNNNNNNINNNNNNNININTKRRKSMDPSLDS.

Over 1–735 the chain is Extracellular; it reads MRLFFKFFYL…TIETSNIAKT (735 aa). N35, N44, N55, N177, N258, N275, N397, N402, N462, N526, N527, N557, N562, and N684 each carry an N-linked (GlcNAc...) asparagine glycan. A helical membrane pass occupies residues 736-756; the sequence is VMIITTSILVLLILLCFGITI. At 757 to 768 the chain is on the cytoplasmic side; it reads AYSKEKVINFGN. A helical transmembrane segment spans residues 769–789; that stretch reads IVFLILMLFSCLFLCIIIYVS. Residues 790-796 are Extracellular-facing; that stretch reads IEPTNFS. The N-linked (GlcNAc...) asparagine glycan is linked to N794. A helical transmembrane segment spans residues 797–817; the sequence is CQFSAIVFPIGIGILFTLTLL. Topologically, residues 818–843 are cytoplasmic; the sequence is KQYKIYKLFKYSDFLKINTDNLKMVK. A helical membrane pass occupies residues 844–864; it reads YAGLIMVPVFLLVLIGVIVYP. Topologically, residues 865 to 888 are extracellular; sequence SKPTFILDLHTKTATKYCISRKYY. Residues 889-909 form a helical membrane-spanning segment; the sequence is VFSIVIVVYEVIILLTSCFIA. The Cytoplasmic portion of the chain corresponds to 910-925; it reads MKSKRYHSTPGTFYES. A helical membrane pass occupies residues 926 to 946; sequence LFNSILIYNYTLVFIVLIPLF. Over 947 to 955 the chain is Extracellular; it reads YTLQNNPTT. The helical transmembrane segment at 956 to 976 threads the bilayer; sequence IYLIYSIGSSILVFATLSIIF. Over 977 to 1095 the chain is Cytoplasmic; the sequence is IPKINFLFRR…SPSSQSIDFL (119 aa). The span at 1074-1105 shows a compositional bias: polar residues; it reads IYPNQIPKQTTNSPSSQSIDFLNNPTIPKNKS. The tract at residues 1074-1187 is disordered; that stretch reads IYPNQIPKQT…RKSMDPSLDS (114 aa). Basic residues predominate over residues 1114-1124; sequence KKPKKKLKSKI. Residues 1125 to 1174 show a composition bias toward low complexity; the sequence is ISKSANSSPNINNNTINNNNNNNNNNNNNNNNNNNNNNINNNNNNNININ.

This sequence belongs to the G-protein coupled receptor 3 family. GABA-B receptor subfamily.

The protein resides in the membrane. This is Metabotropic glutamate receptor-like protein Q (grlQ) from Dictyostelium discoideum (Social amoeba).